The sequence spans 251 residues: Alanyl-tRNA editing protein AlaX-M (251 aa).

Positions 107, 111, 210, and 214 each coordinate Zn(2+).

The protein belongs to the class-II aminoacyl-tRNA synthetase family. Editing domain AlaX-M subfamily. Zn(2+) serves as cofactor.

It localises to the cytoplasm. Functionally, functions in trans to edit the amino acid moiety from mischarged Ser-tRNA(Ala). Recognition depends, at least in part, on the acceptor stem of tRNA(Ala). The polypeptide is Alanyl-tRNA editing protein AlaX-M (alaXM) (Methanosarcina mazei (strain ATCC BAA-159 / DSM 3647 / Goe1 / Go1 / JCM 11833 / OCM 88) (Methanosarcina frisia)).